A 1229-amino-acid chain; its full sequence is Phosphorylase b kinase regulatory subunit alpha, liver isoform (1229 aa).

Positions 625 to 646 (DSLLEDDEEQEEEEEDKFEDDY) are enriched in acidic residues. The tract at residues 625-648 (DSLLEDDEEQEEEEEDKFEDDYNN) is disordered. The interval 825 to 855 (LEELYIQAGACKEWGLIRYISGILRKRVEVL) is calmodulin-binding. A disordered region spans residues 1024–1050 (EIKQRCSSPSTPSGILSPVGPGPADGQ). The segment covering 1028–1037 (RCSSPSTPSG) has biased composition (polar residues). The interval 1052–1092 (HWVERQGQWLRRRRLDGAINRVPVGFYQKVWKILQKCHGLS) is calmodulin-binding. A lipid anchor (S-farnesyl cysteine) is attached at cysteine 1226.

Belongs to the phosphorylase b kinase regulatory chain family. In terms of assembly, polymer of 16 chains, four each of alpha, beta, gamma, and delta. Alpha and beta are regulatory chains, gamma is the catalytic chain, and delta is calmodulin. In terms of processing, although the final Cys may be farnesylated, the terminal tripeptide is probably not removed, and the C-terminus is not methylated.

Its subcellular location is the cell membrane. It functions in the pathway glycan biosynthesis; glycogen metabolism. Its activity is regulated as follows. By phosphorylation of various serine residues and by calcium. Phosphorylase b kinase catalyzes the phosphorylation of serine in certain substrates, including troponin I. The alpha chain may bind calmodulin. In Takifugu rubripes (Japanese pufferfish), this protein is Phosphorylase b kinase regulatory subunit alpha, liver isoform (phka2).